Here is a 435-residue protein sequence, read N- to C-terminus: Enolase (435 aa).

A (2R)-2-phosphoglycerate-binding site is contributed by Q163. Catalysis depends on E205, which acts as the Proton donor. D243, E292, and D319 together coordinate Mg(2+). (2R)-2-phosphoglycerate-binding residues include K344, R373, S374, and K395. K344 functions as the Proton acceptor in the catalytic mechanism.

This sequence belongs to the enolase family. Mg(2+) is required as a cofactor.

The protein resides in the cytoplasm. Its subcellular location is the secreted. The protein localises to the cell surface. It carries out the reaction (2R)-2-phosphoglycerate = phosphoenolpyruvate + H2O. It functions in the pathway carbohydrate degradation; glycolysis; pyruvate from D-glyceraldehyde 3-phosphate: step 4/5. Catalyzes the reversible conversion of 2-phosphoglycerate (2-PG) into phosphoenolpyruvate (PEP). It is essential for the degradation of carbohydrates via glycolysis. This chain is Enolase, found in Streptococcus pyogenes serotype M12 (strain MGAS2096).